The following is a 479-amino-acid chain: Ribosomal RNA small subunit methyltransferase F (479 aa).

Residues 125 to 131, E149, D176, and D194 contribute to the S-adenosyl-L-methionine site; that span reads AAAPGSK. Catalysis depends on C247, which acts as the Nucleophile.

The protein belongs to the class I-like SAM-binding methyltransferase superfamily. RsmB/NOP family.

Its subcellular location is the cytoplasm. The catalysed reaction is cytidine(1407) in 16S rRNA + S-adenosyl-L-methionine = 5-methylcytidine(1407) in 16S rRNA + S-adenosyl-L-homocysteine + H(+). Its function is as follows. Specifically methylates the cytosine at position 1407 (m5C1407) of 16S rRNA. This chain is Ribosomal RNA small subunit methyltransferase F, found in Salmonella enteritidis PT4 (strain P125109).